The chain runs to 518 residues: ETHYLENE INSENSITIVE 3-like 2 protein (518 aa).

Residues 37–73 (DDLSSDEEMEIEELEKKIWRDKQRLKRLKEMAKNGLG) are a coiled coil. Positions 450–518 (FNHPNDLYRP…GQELPTSWIQ (69 aa)) are disordered. Composition is skewed to polar residues over residues 475–484 (PSPSTLNQNL) and 500–518 (GTEN…SWIQ).

The protein belongs to the EIN3 family. In terms of assembly, acts as a homodimer to bind the primary ethylene response element.

The protein localises to the nucleus. Its function is as follows. Probable transcription factor acting as a positive regulator in the ethylene response pathway. Could bind the primary ethylene response element present in the ETHYLENE-RESPONSE-FACTOR1 promoter. This Arabidopsis thaliana (Mouse-ear cress) protein is ETHYLENE INSENSITIVE 3-like 2 protein (EIL2).